The chain runs to 165 residues: Putative L,D-transpeptidase YkuD (165 aa).

The 45-residue stretch at leucine 2–isoleucine 46 folds into the LysM domain. The L,D-TPase catalytic domain maps to tyrosine 57–threonine 164. Residue histidine 124 is the Proton donor/acceptor of the active site. Residue cysteine 140 is the Nucleophile of the active site.

It belongs to the YkuD family. As to quaternary structure, monomer.

Its subcellular location is the spore wall. It participates in cell wall biogenesis; peptidoglycan biosynthesis. In terms of biological role, probable enzyme that may play an important role in cell wall biology. In Bacillus licheniformis (strain ATCC 14580 / DSM 13 / JCM 2505 / CCUG 7422 / NBRC 12200 / NCIMB 9375 / NCTC 10341 / NRRL NRS-1264 / Gibson 46), this protein is Putative L,D-transpeptidase YkuD.